A 603-amino-acid polypeptide reads, in one-letter code: UvrABC system protein C (603 aa).

Positions D15–I92 constitute a GIY-YIG domain. Positions K197 to T232 constitute a UVR domain.

The protein belongs to the UvrC family. As to quaternary structure, interacts with UvrB in an incision complex.

It localises to the cytoplasm. The UvrABC repair system catalyzes the recognition and processing of DNA lesions. UvrC both incises the 5' and 3' sides of the lesion. The N-terminal half is responsible for the 3' incision and the C-terminal half is responsible for the 5' incision. In Listeria monocytogenes serotype 4b (strain F2365), this protein is UvrABC system protein C.